The sequence spans 319 residues: L-lactate dehydrogenase (319 aa).

Residues V17, D38, K43, Y69, and 83–84 contribute to the NAD(+) site; that span reads GA. Substrate contacts are provided by residues Q86, R92, and 124–127; that span reads NPVD. Residues 122 to 124 and S147 each bind NAD(+); that span reads ATN. 152 to 155 contacts substrate; the sequence is DTAR. R157 and H172 together coordinate beta-D-fructose 1,6-bisphosphate. The active-site Proton acceptor is H179. Y224 bears the Phosphotyrosine mark. Substrate is bound at residue T233.

The protein belongs to the LDH/MDH superfamily. LDH family. In terms of assembly, homotetramer.

The protein localises to the cytoplasm. The enzyme catalyses (S)-lactate + NAD(+) = pyruvate + NADH + H(+). It functions in the pathway fermentation; pyruvate fermentation to lactate; (S)-lactate from pyruvate: step 1/1. With respect to regulation, allosterically activated by fructose 1,6-bisphosphate (FBP). Catalyzes the conversion of lactate to pyruvate. The protein is L-lactate dehydrogenase of Bacillus licheniformis (strain ATCC 14580 / DSM 13 / JCM 2505 / CCUG 7422 / NBRC 12200 / NCIMB 9375 / NCTC 10341 / NRRL NRS-1264 / Gibson 46).